Here is a 545-residue protein sequence, read N- to C-terminus: Methionine--tRNA ligase (545 aa).

The 'HIGH' region motif lies at 10–20; the sequence is PYANGSLHIGH. Residues C141, C144, C153, and C156 each coordinate Zn(2+). Residues 329–333 carry the 'KMSKS' region motif; that stretch reads KISTS. T332 serves as a coordination point for ATP.

This sequence belongs to the class-I aminoacyl-tRNA synthetase family. MetG type 1 subfamily. Monomer. Zn(2+) serves as cofactor.

It localises to the cytoplasm. It catalyses the reaction tRNA(Met) + L-methionine + ATP = L-methionyl-tRNA(Met) + AMP + diphosphate. Its function is as follows. Is required not only for elongation of protein synthesis but also for the initiation of all mRNA translation through initiator tRNA(fMet) aminoacylation. The sequence is that of Methionine--tRNA ligase from Streptococcus pneumoniae (strain 70585).